The chain runs to 368 residues: Probable endopolygalacturonase I (368 aa).

An N-terminal signal peptide occupies residues 1 to 18; the sequence is MRSVEILGLAALGSLVAA. Positions 19–31 are excised as a propeptide; sequence APSPSRVSNSAKK. An intrachain disulfide couples Cys35 to Cys50. 2 PbH1 repeats span residues 162–192 and 193–214; these read ATNLQLTDITIDNSDGDENGGHNTDAFDIGE and SNGVYIRGAVVKNQDDCIAINS. Asp207 (proton donor) is an active-site residue. Cys209 and Cys225 form a disulfide bridge. His229 is a catalytic residue. PbH1 repeat units follow at residues 244 to 265, 273 to 295, and 307 to 328; these read VKNVTITDSTISDSDNGVRIKT, VGDVTYSNIKLSNIAKYGIVIEQ, and TTGVPITGLTIDGITGSVASNA. The N-linked (GlcNAc...) asparagine glycan is linked to Asn246. 2 disulfide bridges follow: Cys335/Cys340 and Cys359/Cys368.

It belongs to the glycosyl hydrolase 28 family.

The protein localises to the secreted. It carries out the reaction (1,4-alpha-D-galacturonosyl)n+m + H2O = (1,4-alpha-D-galacturonosyl)n + (1,4-alpha-D-galacturonosyl)m.. Its function is as follows. Involved in maceration and soft-rotting of plant tissue. Hydrolyzes the 1,4-alpha glycosidic bonds of de-esterified pectate in the smooth region of the plant cell wall. The chain is Probable endopolygalacturonase I (pgaI) from Aspergillus clavatus (strain ATCC 1007 / CBS 513.65 / DSM 816 / NCTC 3887 / NRRL 1 / QM 1276 / 107).